The chain runs to 289 residues: Zinc finger matrin-type protein 3 (289 aa).

A disordered region spans residues 1–42 (MILLQHAVLPPPKQPSPSPPMSVATRSTGTLQLPPQKPFGQE). Over residues 9–20 (LPPPKQPSPSPP) the composition is skewed to pro residues. Over residues 24-33 (ATRSTGTLQL) the composition is skewed to polar residues. 2 consecutive Matrin-type zinc fingers follow at residues 70–100 (LYCK…KLRN) and 147–177 (DYCK…RLRL). Polar residues predominate over residues 180 to 191 (AQSNSFSESSEL). Residues 180-201 (AQSNSFSESSELGQRRARKEGN) form a disordered region. Residues 246–276 (FYCSMCNVGAGEEMEFRQHLESKQHKSKVSE) form a Matrin-type 3 zinc finger.

In terms of assembly, interacts with dsRNA. Highly expressed in adult brain, and moderately in adult kidney and testis. Not detected in fetal brain, heart, pancreas, adrenal gland, liver or small intestine.

The protein localises to the nucleus. It localises to the nucleolus. Functionally, acts as a bona fide target gene of p53/TP53. May play a role in the TP53-dependent growth regulatory pathway. May contribute to TP53-mediated apoptosis by regulation of TP53 expression and translocation to the nucleus and nucleolus. The sequence is that of Zinc finger matrin-type protein 3 from Homo sapiens (Human).